A 305-amino-acid polypeptide reads, in one-letter code: Translation initiation factor eIF2B subunit alpha (305 aa).

Belongs to the eIF-2B alpha/beta/delta subunits family. In terms of assembly, component of the translation initiation factor 2B (eIF2B) complex which is a heterodecamer of two sets of five different subunits: alpha, beta, gamma, delta and epsilon. Subunits alpha, beta and delta comprise a regulatory subcomplex and subunits epsilon and gamma comprise a catalytic subcomplex. Within the complex, the hexameric regulatory complex resides at the center, with the two heterodimeric catalytic subcomplexes bound on opposite sides.

The protein resides in the cytoplasm. Its subcellular location is the cytosol. Its function is as follows. Acts as a component of the translation initiation factor 2B (eIF2B) complex, which catalyzes the exchange of GDP for GTP on eukaryotic initiation factor 2 (eIF2) gamma subunit. Its guanine nucleotide exchange factor activity is repressed when bound to eIF2 complex phosphorylated on the alpha subunit, thereby limiting the amount of methionyl-initiator methionine tRNA available to the ribosome and consequently global translation is repressed. The polypeptide is Translation initiation factor eIF2B subunit alpha (Caenorhabditis elegans).